A 755-amino-acid polypeptide reads, in one-letter code: ABC transporter G family member 2 (755 aa).

In terms of domain architecture, ABC transporter spans 98–358; that stretch reads LSFTDLTYSV…FSEFKHPIPE (261 aa). 151-158 is a binding site for ATP; sequence GASGSGKS. An ABC transmembrane type-2 domain is found at 449–659; the sequence is IEMIVIGKRA…PYEGVLQNEF (211 aa). 6 helical membrane passes run 468-488, 503-523, 552-572, 579-599, 609-629, and 728-748; these read LLGM…TMFT, FFAF…PVFL, IPAL…AVGL, FFFF…FVTF, LGFT…GFFI, and LWIT…TLLI.

It belongs to the ABC transporter superfamily. ABCG family. Eye pigment precursor importer (TC 3.A.1.204) subfamily.

It is found in the membrane. This chain is ABC transporter G family member 2 (ABCG2), found in Arabidopsis thaliana (Mouse-ear cress).